The chain runs to 352 residues: Glycerol-1-phosphate dehydrogenase [NAD(P)+] (352 aa).

Residues 98–102 and 120–123 contribute to the NAD(+) site; these read GKPID and TAAS. Aspartate 125 is a binding site for substrate. Serine 129 provides a ligand contact to NAD(+). Substrate is bound at residue aspartate 172. Residues aspartate 172 and histidine 252 each contribute to the Zn(2+) site. Histidine 256 contributes to the substrate binding site. Histidine 268 is a Zn(2+) binding site.

Belongs to the glycerol-1-phosphate dehydrogenase family. Requires Zn(2+) as cofactor.

Its subcellular location is the cytoplasm. The enzyme catalyses sn-glycerol 1-phosphate + NAD(+) = dihydroxyacetone phosphate + NADH + H(+). It catalyses the reaction sn-glycerol 1-phosphate + NADP(+) = dihydroxyacetone phosphate + NADPH + H(+). The protein operates within membrane lipid metabolism; glycerophospholipid metabolism. Its function is as follows. Catalyzes the NAD(P)H-dependent reduction of dihydroxyacetonephosphate (DHAP or glycerone phosphate) to glycerol 1-phosphate (G1P). The G1P thus generated is used as the glycerophosphate backbone of phospholipids in the cellular membranes of Archaea. This is Glycerol-1-phosphate dehydrogenase [NAD(P)+] from Natronomonas pharaonis (strain ATCC 35678 / DSM 2160 / CIP 103997 / JCM 8858 / NBRC 14720 / NCIMB 2260 / Gabara) (Halobacterium pharaonis).